We begin with the raw amino-acid sequence, 87 residues long: Exodeoxyribonuclease 7 small subunit (87 aa).

This sequence belongs to the XseB family. In terms of assembly, heterooligomer composed of large and small subunits.

It is found in the cytoplasm. The enzyme catalyses Exonucleolytic cleavage in either 5'- to 3'- or 3'- to 5'-direction to yield nucleoside 5'-phosphates.. Its function is as follows. Bidirectionally degrades single-stranded DNA into large acid-insoluble oligonucleotides, which are then degraded further into small acid-soluble oligonucleotides. The chain is Exodeoxyribonuclease 7 small subunit from Pelotomaculum thermopropionicum (strain DSM 13744 / JCM 10971 / SI).